A 115-amino-acid polypeptide reads, in one-letter code: Ig heavy chain V-III region W3082 (115 aa).

The Ig-like domain occupies glutamate 1–serine 114. A disulfide bridge connects residues cysteine 22 and cysteine 98.

The protein is Ig heavy chain V-III region W3082 of Mus musculus (Mouse).